Reading from the N-terminus, the 354-residue chain is D-alanine--D-alanine ligase (354 aa).

Positions Lys-133 to Glu-338 constitute an ATP-grasp domain. Glu-166–Glu-221 is an ATP binding site. Mg(2+) contacts are provided by Asp-292, Glu-305, and Asn-307.

The protein belongs to the D-alanine--D-alanine ligase family. Mg(2+) is required as a cofactor. Requires Mn(2+) as cofactor.

It localises to the cytoplasm. It carries out the reaction 2 D-alanine + ATP = D-alanyl-D-alanine + ADP + phosphate + H(+). The protein operates within cell wall biogenesis; peptidoglycan biosynthesis. Functionally, cell wall formation. This is D-alanine--D-alanine ligase from Bacillus velezensis (strain DSM 23117 / BGSC 10A6 / LMG 26770 / FZB42) (Bacillus amyloliquefaciens subsp. plantarum).